A 260-amino-acid polypeptide reads, in one-letter code: Indole-3-glycerol phosphate synthase (260 aa).

This sequence belongs to the TrpC family.

It catalyses the reaction 1-(2-carboxyphenylamino)-1-deoxy-D-ribulose 5-phosphate + H(+) = (1S,2R)-1-C-(indol-3-yl)glycerol 3-phosphate + CO2 + H2O. It functions in the pathway amino-acid biosynthesis; L-tryptophan biosynthesis; L-tryptophan from chorismate: step 4/5. This is Indole-3-glycerol phosphate synthase from Staphylococcus aureus (strain COL).